The chain runs to 383 residues: S-adenosylmethionine synthase (383 aa).

Residue histidine 15 participates in ATP binding. Residue aspartate 17 coordinates Mg(2+). Glutamate 43 contacts K(+). L-methionine-binding residues include glutamate 56 and glutamine 99. Residues 99 to 109 (QSPDINQGVDR) are flexible loop. ATP is bound by residues 164–166 (DAK), 230–231 (RF), aspartate 239, 245–246 (RK), alanine 262, and lysine 266. Aspartate 239 provides a ligand contact to L-methionine. Lysine 270 contacts L-methionine.

It belongs to the AdoMet synthase family. As to quaternary structure, homotetramer; dimer of dimers. It depends on Mg(2+) as a cofactor. The cofactor is K(+).

It localises to the cytoplasm. The catalysed reaction is L-methionine + ATP + H2O = S-adenosyl-L-methionine + phosphate + diphosphate. The protein operates within amino-acid biosynthesis; S-adenosyl-L-methionine biosynthesis; S-adenosyl-L-methionine from L-methionine: step 1/1. Functionally, catalyzes the formation of S-adenosylmethionine (AdoMet) from methionine and ATP. The overall synthetic reaction is composed of two sequential steps, AdoMet formation and the subsequent tripolyphosphate hydrolysis which occurs prior to release of AdoMet from the enzyme. This is S-adenosylmethionine synthase from Shewanella oneidensis (strain ATCC 700550 / JCM 31522 / CIP 106686 / LMG 19005 / NCIMB 14063 / MR-1).